A 1736-amino-acid polypeptide reads, in one-letter code: MERCSRCHHLLLLVLLLLWLSAAPAWAGTAPVDVLRALRFPALPDGVRRARGICPADVAYRVSRPAQLSAPTRQLFPGGFPKDFSLLTAVRARPGLQAPLLTLYSAQGVRQLGLELGRPVRFLYEDQTGRPQPPAQPVFRGLSLADGKWHRVAVAVKGQSVTLIIDCKKRVTRPLPRSARPVLDTRGVIIFGARILDEEVFEGDIQELSIIPGVQAAYESCDQKELECEGGWRERPQRQPSHRTQRSPKQQPPRLHRPQNQEPQAQSTESLYYDYEPPYYDVMTTGTTPDYQDPTPGEEEGILESSPLPPPEEEQTDLQVPPTADRFLTEEYGEGGTEPPAGPYDYTYAYGDDYHEETELGPALSAETARSEAAARGPRGLKGEKGEPAVLEPGMLVEGPPGPEGPAGFPGPPGIQGNPGPVGDPGERGPPGRAGLPGSDGAPGPPGTSLMLPFRFGSGGGDKGPVVAAQEAQAQAILQQARVALRGPPGPMGYTGRPGPLGQPGSPGMKGESGDLGPQGPRGPQGLMGPPGKAGRRGRAGADGARGMPGEPGVKGDRGFDGLPGLPGEKGHRGDTGAQGLPGPPGEDGERGDDGEIGPRGLPGESGPRGLLGPKGPPGIPGPPGVRGMDGPHGPKGSLGPQGEPGPPGQQGTPGTQGLPGPQGAIGPHGEKGPRGKPGLPGMPGSDGPPGHPGKEGPPGTKGNQGPSGPQGPLGYPGPRGIKGVDGIRGLKGHKGEKGEDGFPGFKGDMGVKGDRGEVGVPGSRGEDGPEGPKGRTGPTGDPGPPGLMGEKGKLGVPGLPGYPGRQGPKGSLGFPGFPGASGEKGARGLSGKSGPRGERGPTGPRGQRGPRGATGKSGAKGTSGGDGPHGPPGERGLPGPQGPNGFPGPKGPPGPPGKDGLPGHPGQRGEVGFQGKTGPPGPPGVVGPQGAAGETGPMGERGHPGPPGPPGEQGLTGTAGKEGTKGDPGPPGAPGKDGPAGLRGFPGERGLPGTAGGPGLKGNEGPAGPPGPAGSPGERGSAGSGGPIGPPGRPGPQGPPGAAGEKGVPGEKGPIGPTGRDGVQGPVGLPGPAGPPGVAGEDGDKGEVGDPGQKGAKGNKGEHGPPGPPGPIGPVGQPGAAGADGEPGARGPQGHFGAKGDEGTRGFNGPPGPIGLQGLPGPSGEKGETGDVGPMGPPGPPGPRGPAGPNGADGPQGPPGGVGNLGPPGEKGEPGESGSPGVQGEPGVKGPRGERGEKGETGQAGEAGPPGPKGPTGDDGPKGNPGPVGFPGDPGPPGEVGPRGQDGAKGDRGEDGEPGQPGSPGPTGENGPPGPLGKRGPAGTPGPEGRQGEKGAKGDPGAVGAPGKTGPVGPAGPAGKPGPDGLRGLPGSVGQQGRPGATGQAGPPGPVGPPGLPGLRGDTGAKGEKGHPGLIGLIGPPGEQGEKGDRGLPGPQGSTGQKGETGIPGASGPIGPGGPPGLPGPAGPKGAKGATGPAGPKGEKGVQGPPGHPGPPGEVIQPLPIQMPKKTRRSVDGSRLMQEDEAVPTGGAPGSPGGLEEIFGSLDSLREEIEQMRRPMGTQDSPARTCQDLKLCHPELPDGEYWVDPNQGCARDAFRVFCNFTAGGETCVTPRDDVTQFSYVDSEGAPVGVVQLTFLRLLSVSARQNISYPCSGEAQDSPLKLRGANEDELSPETSPYIKEIRDGCQTQQGRTVLEVRTPVLEQLPVLDASFSELGAPPRRGGVLLGPVCFMG.

The N-terminal stretch at 1 to 27 (MERCSRCHHLLLLVLLLLWLSAAPAWA) is a signal peptide. A Laminin G-like domain is found at 57–228 (DVAYRVSRPA…ESCDQKELEC (172 aa)). The segment at 215-486 (QAAYESCDQK…ILQQARVALR (272 aa)) is nonhelical region. Disordered stretches follow at residues 229–465 (EGGW…DKGP) and 485–1539 (LRGP…SPGG). Over residues 258 to 270 (PQNQEPQAQSTES) the composition is skewed to polar residues. The segment covering 363-376 (ALSAETARSEAAAR) has biased composition (low complexity). 3 consecutive Collagen-like domains span residues 399 to 447 (GPPG…GPPG), 487 to 545 (GPPG…ADGA), and 546 to 587 (RGMP…PPGE). The segment covering 400 to 413 (PPGPEGPAGFPGPP) has biased composition (pro residues). Residues 487–1500 (GPPGPMGYTG…PGHPGPPGEV (1014 aa)) form a triple-helical region region. Residues 515–533 (DLGPQGPRGPQGLMGPPGK) are compositionally biased toward low complexity. Pro residues predominate over residues 615–624 (KGPPGIPGPP). The segment covering 650-663 (QQGTPGTQGLPGPQ) has biased composition (low complexity). Residues 765 to 774 (RGEDGPEGPK) show a composition bias toward basic and acidic residues. The segment covering 842-861 (PTGPRGQRGPRGATGKSGAK) has biased composition (low complexity). A compositionally biased stretch (gly residues) spans 994 to 1003 (GTAGGPGLKG). Residues 1029–1040 (IGPPGRPGPQGP) show a composition bias toward pro residues. 2 Collagen-like domains span residues 1072–1127 (GPAG…ADGE) and 1128–1172 (PGAR…ETGD). The segment covering 1115 to 1133 (PVGQPGAAGADGEPGARGP) has biased composition (low complexity). Residues 1176-1187 (MGPPGPPGPRGP) are compositionally biased toward pro residues. Low complexity predominate over residues 1217–1230 (ESGSPGVQGEPGVK). 2 stretches are compositionally biased toward basic and acidic residues: residues 1232-1241 (PRGERGEKGE) and 1287-1296 (DGAKGDRGED). Low complexity-rich tracts occupy residues 1341-1364 (PGAV…KPGP) and 1376-1386 (QQGRPGATGQA). The segment covering 1388–1397 (PPGPVGPPGL) has biased composition (pro residues). Residues 1413–1422 (PGLIGLIGPP) are compositionally biased toward low complexity. One can recognise a Collagen-like 6 domain in the interval 1444-1499 (GETGIPGASGPIGPGGPPGLPGPAGPKGAKGATGPAGPKGEKGVQGPPGHPGPPGE). The span at 1457–1467 (PGGPPGLPGPA) shows a compositional bias: pro residues. A compositionally biased stretch (low complexity) spans 1469 to 1481 (PKGAKGATGPAGP). A propeptide spans 1501-1736 (IQPLPIQMPK…VLLGPVCFMG (236 aa)) (C-terminal propeptide). In terms of domain architecture, Fibrillar collagen NC1 spans 1541-1735 (EEIFGSLDSL…GVLLGPVCFM (195 aa)). Cys-1571 and Cys-1603 form a disulfide bridge. The Ca(2+) site is built by Asp-1589, Asn-1591, Gln-1592, Cys-1594, and Asp-1597. Asn-1604 and Asn-1650 each carry an N-linked (GlcNAc...) asparagine glycan. 2 disulfide bridges follow: Cys-1612–Cys-1733 and Cys-1655–Cys-1689.

The protein belongs to the fibrillar collagen family. Trimers composed of three different chains: alpha 1(XI), alpha 2(XI), and alpha 3(XI). Alpha 3(XI) is a post-translational modification of alpha 1(II). Alpha 1(V) can also be found instead of alpha 3(XI)=1(II). Post-translationally, prolines at the third position of the tripeptide repeating unit (G-X-Y) are hydroxylated in some or all of the chains.

The protein resides in the secreted. Its subcellular location is the extracellular space. It is found in the extracellular matrix. Its function is as follows. May play an important role in fibrillogenesis by controlling lateral growth of collagen II fibrils. The protein is Collagen alpha-2(XI) chain (COL11A2) of Bos taurus (Bovine).